The chain runs to 637 residues: Poly [ADP-ribose] polymerase 2 (637 aa).

A DNA-binding region spans residues 1–140 (MANKLKVDEL…KKEEKIVTAT (140 aa)). Residues 2-36 (ANKLKVDELRLKLAERGLSTTGVKAVLVERLEEAI) enclose the SAP 1 domain. Basic and acidic residues predominate over residues 35–46 (AIAEDTKKEESK). The interval 35–56 (AIAEDTKKEESKSKRKRNSSND) is disordered. The short motif at 41–62 (KKEESKSKRKRNSSNDTYESNK) is the Nuclear localization signal element. The region spanning 69 to 103 (FRGMIVKELREEAIKRGLDTTGTKKDLLERLCNDA) is the SAP 2 domain. A compositionally biased stretch (polar residues) spans 106 to 117 (VSNAPVKSSNGT). The segment at 106–134 (VSNAPVKSSNGTDEAEDDNNGFEEEKKEE) is disordered. The span at 118–127 (DEAEDDNNGF) shows a compositional bias: acidic residues. In terms of domain architecture, WGR spans 158-255 (QYHVLQRGDD…KEFIPHPKSY (98 aa)). In terms of domain architecture, PARP alpha-helical spans 286–404 (QSKLDTRVAK…EIELATKLLS (119 aa)). One can recognise a PARP catalytic domain in the interval 412-637 (DPLYYHYQQL…VIQVKFNYKH (226 aa)).

It belongs to the ARTD/PARP family.

Its subcellular location is the nucleus. The catalysed reaction is NAD(+) + (ADP-D-ribosyl)n-acceptor = nicotinamide + (ADP-D-ribosyl)n+1-acceptor + H(+).. It carries out the reaction L-aspartyl-[protein] + NAD(+) = 4-O-(ADP-D-ribosyl)-L-aspartyl-[protein] + nicotinamide. The enzyme catalyses L-glutamyl-[protein] + NAD(+) = 5-O-(ADP-D-ribosyl)-L-glutamyl-[protein] + nicotinamide. Functionally, involved in the base excision repair (BER) pathway, by catalyzing the poly(ADP-ribosyl)ation of a limited number of acceptor proteins involved in chromatin architecture and in DNA metabolism. This modification follows DNA damages and appears as an obligatory step in a detection/signaling pathway leading to the reparation of DNA strand breaks. The protein is Poly [ADP-ribose] polymerase 2 (PARP2) of Arabidopsis thaliana (Mouse-ear cress).